We begin with the raw amino-acid sequence, 80 residues long: UPF0181 protein SG1330 (80 aa).

The disordered stretch occupies residues 58–80 (TEVLETPAARAETDPYDSNPDDD).

The protein belongs to the UPF0181 family.

The chain is UPF0181 protein SG1330 from Sodalis glossinidius (strain morsitans).